Consider the following 135-residue polypeptide: Global transcriptional regulator Spx 2 (135 aa).

The active site involves Cys-10.

This sequence belongs to the ArsC family. Spx subfamily. Interacts with the C-terminal domain of the alpha subunit of the RNAP.

It localises to the cytoplasm. In terms of biological role, global transcriptional regulator that plays a key role in stress response and exerts either positive or negative regulation of genes. Acts by interacting with the C-terminal domain of the alpha subunit of the RNA polymerase (RNAP). This interaction can enhance binding of RNAP to the promoter region of target genes and stimulate their transcription, or block interaction of RNAP with activator. In Oceanobacillus iheyensis (strain DSM 14371 / CIP 107618 / JCM 11309 / KCTC 3954 / HTE831), this protein is Global transcriptional regulator Spx 2.